We begin with the raw amino-acid sequence, 242 residues long: Ribonuclease 3 2 (242 aa).

The 126-residue stretch at 12–137 folds into the RNase III domain; the sequence is LESLVRKLGL…VLGALYLSTS (126 aa). Residue E51 coordinates Mg(2+). D55 is a catalytic residue. Mg(2+)-binding residues include D123 and E126. Residue E126 is part of the active site. Positions 165–235 constitute a DRBM domain; it reads NYKAALQEWT…AKVAFLAITP (71 aa).

The protein belongs to the ribonuclease III family. Homodimer. It depends on Mg(2+) as a cofactor.

The protein resides in the cytoplasm. The enzyme catalyses Endonucleolytic cleavage to 5'-phosphomonoester.. In terms of biological role, digests double-stranded RNA. Involved in the processing of primary rRNA transcript to yield the immediate precursors to the large and small rRNAs (23S and 16S). Processes some mRNAs, and tRNAs when they are encoded in the rRNA operon. Processes pre-crRNA and tracrRNA of type II CRISPR loci if present in the organism. The polypeptide is Ribonuclease 3 2 (rnc2) (Nostoc sp. (strain PCC 7120 / SAG 25.82 / UTEX 2576)).